The sequence spans 401 residues: MPTIMNCKHLGICGGCSSPQSAYADSLKAKEQILHELFAPIFPPSEILPVIPCDPVLRGRNKMEFSFFQTKEGKKSLGFITPTKPKQGVPITECLMIHEDTMDILNLTRAWWDNHPELTAYYPPFNKGSLCTLTVRIGSPERKLMVILTTSAREEYAVEKGIIEEWKNALINSSLPIVSIIWEEKVSAKNAPTYFRSHLIHGEPFIKQTLTLPKDGNSGVFHVRPRSFFQPQSLQGAKIIEIAKEFMNPQGSETLLDLYCGAGTIGIMLSAYVKKVIGVEIVPDAIDSAKENILINKKENLIEVYLEDAKTFCRRHQDCPPPDVVVIDPPRCGIQNKVLKYLLRIFPKKIIYISCNPKIQFEECCSLISAGYHIKKVQPLDQFPHSPHLENIILLEREDSL.

Cysteine 7, cysteine 13, cysteine 16, and cysteine 94 together coordinate [4Fe-4S] cluster. Residues glutamine 230, tyrosine 259, glutamate 280, and aspartate 328 each coordinate S-adenosyl-L-methionine. Catalysis depends on cysteine 355, which acts as the Nucleophile.

The protein belongs to the class I-like SAM-binding methyltransferase superfamily. RNA M5U methyltransferase family.

This is an uncharacterized protein from Chlamydia caviae (strain ATCC VR-813 / DSM 19441 / 03DC25 / GPIC) (Chlamydophila caviae).